We begin with the raw amino-acid sequence, 75 residues long: UPF0352 protein plu2871 (75 aa).

The protein belongs to the UPF0352 family.

This is UPF0352 protein plu2871 from Photorhabdus laumondii subsp. laumondii (strain DSM 15139 / CIP 105565 / TT01) (Photorhabdus luminescens subsp. laumondii).